The following is a 191-amino-acid chain: SCO2-like protein RP031 (191 aa).

Belongs to the SCO1/2 family.

This chain is SCO2-like protein RP031, found in Rickettsia prowazekii (strain Madrid E).